The chain runs to 229 residues: Complex I assembly factor TMEM126B, mitochondrial (229 aa).

Helical transmembrane passes span 71–91 (IRGTLFFGVSSSLSGVMANLV), 109–129 (LTTLPFVATAVTYKLFVTDAL), 140–160 (VLRSSLIGVACGVSYPSALAF), and 198–218 (VPLLFQIIFGVFNGLYHYAVC).

Part of the mitochondrial complex I assembly/MCIA complex that comprises at least the core subunits TMEM126B, NDUFAF1, ECSIT and ACAD9 and complement subunits such as COA1 and TMEM186. Associates with the intermediate 370 kDa subcomplex of incompletely assembled complex I. Interacts with TMEM70.

The protein localises to the mitochondrion membrane. Its function is as follows. As part of the MCIA complex, involved in the assembly of the mitochondrial complex I. Participates in constructing the membrane arm of complex I. This chain is Complex I assembly factor TMEM126B, mitochondrial, found in Rattus norvegicus (Rat).